Consider the following 247-residue polypeptide: ATP synthase subunit a, chloroplastic (247 aa).

5 helical membrane passes run 38-58, 95-115, 134-154, 199-219, and 220-240; these read QVLITSWVVIAILLGSATLAV, VPFIGTMFLFIFVSNWSGALL, INTTVALALLTSVAYFYAGLT, LVVVVLVSLVPSVVPIPVMFL, and GLFTSGIQALIFATLAAAYIG.

Belongs to the ATPase A chain family. As to quaternary structure, F-type ATPases have 2 components, CF(1) - the catalytic core - and CF(0) - the membrane proton channel. CF(1) has five subunits: alpha(3), beta(3), gamma(1), delta(1), epsilon(1). CF(0) has four main subunits: a, b, b' and c.

The protein resides in the plastid. It localises to the chloroplast thylakoid membrane. Functionally, key component of the proton channel; it plays a direct role in the translocation of protons across the membrane. The chain is ATP synthase subunit a, chloroplastic from Guizotia abyssinica (Niger).